The sequence spans 151 residues: Probable ribonuclease P/MRP protein subunit POP5 (151 aa).

The protein belongs to the eukaryotic/archaeal RNase P protein component 2 family. In terms of assembly, component of nuclear RNase P and RNase MRP ribonucleoproteins. Interacts with GAF1/RPP30.

Its subcellular location is the nucleus. It localises to the nucleolus. Its function is as follows. Essential protein required during embryogenesis. Component of ribonuclease P, a protein complex that generates mature tRNA molecules by cleaving their 5'-ends. Also a component of RNase MRP. The chain is Probable ribonuclease P/MRP protein subunit POP5 (EMB1687) from Arabidopsis thaliana (Mouse-ear cress).